Consider the following 367-residue polypeptide: UDP-N-acetylglucosamine--N-acetylmuramyl-(pentapeptide) pyrophosphoryl-undecaprenol N-acetylglucosamine transferase (367 aa).

UDP-N-acetyl-alpha-D-glucosamine is bound by residues 15–17, Asn-127, Arg-163, Ser-191, Ile-249, and Gln-294; that span reads TGG.

Belongs to the glycosyltransferase 28 family. MurG subfamily.

It localises to the cell inner membrane. It catalyses the reaction di-trans,octa-cis-undecaprenyl diphospho-N-acetyl-alpha-D-muramoyl-L-alanyl-D-glutamyl-meso-2,6-diaminopimeloyl-D-alanyl-D-alanine + UDP-N-acetyl-alpha-D-glucosamine = di-trans,octa-cis-undecaprenyl diphospho-[N-acetyl-alpha-D-glucosaminyl-(1-&gt;4)]-N-acetyl-alpha-D-muramoyl-L-alanyl-D-glutamyl-meso-2,6-diaminopimeloyl-D-alanyl-D-alanine + UDP + H(+). It participates in cell wall biogenesis; peptidoglycan biosynthesis. Its function is as follows. Cell wall formation. Catalyzes the transfer of a GlcNAc subunit on undecaprenyl-pyrophosphoryl-MurNAc-pentapeptide (lipid intermediate I) to form undecaprenyl-pyrophosphoryl-MurNAc-(pentapeptide)GlcNAc (lipid intermediate II). The polypeptide is UDP-N-acetylglucosamine--N-acetylmuramyl-(pentapeptide) pyrophosphoryl-undecaprenol N-acetylglucosamine transferase (Burkholderia pseudomallei (strain 1710b)).